Consider the following 166-residue polypeptide: Ribosome maturation factor RimM (166 aa).

One can recognise a PRC barrel domain in the interval 94 to 166 (EDEFYITDLN…AILNYKRDEL (73 aa)).

It belongs to the RimM family. Binds ribosomal protein uS19.

It is found in the cytoplasm. Functionally, an accessory protein needed during the final step in the assembly of 30S ribosomal subunit, possibly for assembly of the head region. Essential for efficient processing of 16S rRNA. May be needed both before and after RbfA during the maturation of 16S rRNA. It has affinity for free ribosomal 30S subunits but not for 70S ribosomes. The protein is Ribosome maturation factor RimM of Rickettsia bellii (strain RML369-C).